The following is a 237-amino-acid chain: Probable glutathione-independent glyoxalase HSP32 (237 aa).

Catalysis depends on residues Cys138, His139, and Glu170.

It belongs to the peptidase C56 family. HSP31-like subfamily. In terms of assembly, homodimer.

The protein localises to the cytoplasm. Its subcellular location is the P-body. It catalyses the reaction methylglyoxal + H2O = (R)-lactate + H(+). Its function is as follows. Catalyzes the conversion of methylglyoxal (MG) to D-lactate in a single glutathione (GSH)-independent step. May play a role in detoxifying endogenously produced glyoxals. Involved in protection against reactive oxygen species (ROS). Important for viability in stationary phase. May negatively regulate TORC1 in response to nutrient limitation. This Saccharomyces cerevisiae (strain ATCC 204508 / S288c) (Baker's yeast) protein is Probable glutathione-independent glyoxalase HSP32.